A 71-amino-acid chain; its full sequence is Beta-defensin 25 (71 aa).

The signal sequence occupies residues 1 to 22 (MAKWILLIVALLVLSHVPPGST). 3 disulfide bridges follow: Cys27-Cys54, Cys34-Cys48, and Cys38-Cys55.

This sequence belongs to the beta-defensin family.

The protein resides in the secreted. In terms of biological role, has antibacterial activity. In Mus musculus (Mouse), this protein is Beta-defensin 25 (Defb25).